The sequence spans 152 residues: Deoxyuridine 5'-triphosphate nucleotidohydrolase (152 aa).

Residues 65–67 (RSG), Asn-78, and 82–84 (TID) each bind substrate.

This sequence belongs to the dUTPase family. Requires Mg(2+) as cofactor.

It carries out the reaction dUTP + H2O = dUMP + diphosphate + H(+). The protein operates within pyrimidine metabolism; dUMP biosynthesis; dUMP from dCTP (dUTP route): step 2/2. Functionally, this enzyme is involved in nucleotide metabolism: it produces dUMP, the immediate precursor of thymidine nucleotides and it decreases the intracellular concentration of dUTP so that uracil cannot be incorporated into DNA. The chain is Deoxyuridine 5'-triphosphate nucleotidohydrolase from Chlorobaculum tepidum (strain ATCC 49652 / DSM 12025 / NBRC 103806 / TLS) (Chlorobium tepidum).